A 635-amino-acid polypeptide reads, in one-letter code: 1-deoxy-D-xylulose-5-phosphate synthase (635 aa).

Residues H79 and 120–122 contribute to the thiamine diphosphate site; that span reads GHS. Residue D151 participates in Mg(2+) binding. Thiamine diphosphate contacts are provided by residues 152–153, N182, Y291, and E372; that span reads GA. A Mg(2+)-binding site is contributed by N182.

Belongs to the transketolase family. DXPS subfamily. As to quaternary structure, homodimer. Mg(2+) serves as cofactor. Requires thiamine diphosphate as cofactor.

It catalyses the reaction D-glyceraldehyde 3-phosphate + pyruvate + H(+) = 1-deoxy-D-xylulose 5-phosphate + CO2. It participates in metabolic intermediate biosynthesis; 1-deoxy-D-xylulose 5-phosphate biosynthesis; 1-deoxy-D-xylulose 5-phosphate from D-glyceraldehyde 3-phosphate and pyruvate: step 1/1. Functionally, catalyzes the acyloin condensation reaction between C atoms 2 and 3 of pyruvate and glyceraldehyde 3-phosphate to yield 1-deoxy-D-xylulose-5-phosphate (DXP). This is 1-deoxy-D-xylulose-5-phosphate synthase from Xylella fastidiosa (strain M12).